The sequence spans 192 residues: BON1-associated protein 1 (192 aa).

A C2 domain is found at methionine 1–phenylalanine 119.

Interacts with BON1 (via VWA domain), BON2 and BON3. As to expression, expressed in roots, leaves, stems and flowers.

The protein localises to the membrane. Its function is as follows. Negative regulator of cell death and defense responses. Exhibits calcium-dependent phospholipid binding properties. The sequence is that of BON1-associated protein 1 (BAP1) from Arabidopsis thaliana (Mouse-ear cress).